We begin with the raw amino-acid sequence, 784 residues long: E3 UFM1-protein ligase 1 homolog (784 aa).

The tract at residues 401–481 is disordered; the sequence is QKGNSSAQDL…GGGGGGNKKT (81 aa).

Belongs to the UFL1 family.

Functionally, E3 UFM1-protein ligase that mediates ufmylation of target proteins. In Drosophila ananassae (Fruit fly), this protein is E3 UFM1-protein ligase 1 homolog.